The sequence spans 523 residues: Maintenance of mitochondrial morphology protein 1 (523 aa).

Residues 1–43 lie on the Lumenal side of the membrane; that stretch reads MAGSTSASLQTPYFPSSTQINPVRVDHTLPLPPAQPSLSFTQG. A helical membrane pass occupies residues 44-64; the sequence is LLVGQLSVVLLIGAFIKFFIF. The Cytoplasmic segment spans residues 65-523; that stretch reads GEAPPPPSRG…GSMPDTVTET (459 aa). Disordered regions lie at residues 70–118, 295–349, 420–473, and 492–523; these read PPSR…SSST, TSDQ…SKHG, RTGL…IDRG, and GGHQ…VTET. 3 stretches are compositionally biased toward polar residues: residues 74-96, 105-118, and 295-312; these read GLSN…TDSS, STSN…SSST, and TSDQ…TTSE. The SMP-LTD domain maps to 151 to 412; sequence QPESLDWFNV…EPRVQVVGLP (262 aa). The segment covering 449 to 467 has biased composition (gly residues); sequence GVSGGGGSGGGSGGGGGSM.

This sequence belongs to the MMM1 family. In terms of assembly, homodimer. Component of the ER-mitochondria encounter structure (ERMES) or MDM complex, composed of MMM1, MDM10, MDM12 and MDM34. An MMM1 homodimer associates with one molecule of MDM12 on each side in a pairwise head-to-tail manner, and the SMP-LTD domains of MMM1 and MDM12 generate a continuous hydrophobic tunnel for phospholipid trafficking.

It localises to the endoplasmic reticulum membrane. Functionally, component of the ERMES/MDM complex, which serves as a molecular tether to connect the endoplasmic reticulum (ER) and mitochondria. Components of this complex are involved in the control of mitochondrial shape and protein biogenesis, and function in nonvesicular lipid trafficking between the ER and mitochondria. The MDM12-MMM1 subcomplex functions in the major beta-barrel assembly pathway that is responsible for biogenesis of all outer membrane beta-barrel proteins, and acts in a late step after the SAM complex. The MDM10-MDM12-MMM1 subcomplex further acts in the TOM40-specific pathway after the action of the MDM12-MMM1 complex. Essential for establishing and maintaining the structure of mitochondria and maintenance of mtDNA nucleoids. This is Maintenance of mitochondrial morphology protein 1 from Paracoccidioides brasiliensis (strain Pb03).